Reading from the N-terminus, the 283-residue chain is Pantothenate synthetase (283 aa).

Position 30–37 (30–37) interacts with ATP; the sequence is MGYYHSGH. His37 functions as the Proton donor in the catalytic mechanism. (R)-pantoate is bound at residue Gln61. Beta-alanine is bound at residue Gln61. ATP is bound at residue 147–150; sequence GQKD. Gln153 provides a ligand contact to (R)-pantoate. Residues Val176 and 184–187 each bind ATP; that span reads MSSR.

This sequence belongs to the pantothenate synthetase family. Homodimer.

Its subcellular location is the cytoplasm. The enzyme catalyses (R)-pantoate + beta-alanine + ATP = (R)-pantothenate + AMP + diphosphate + H(+). Its pathway is cofactor biosynthesis; (R)-pantothenate biosynthesis; (R)-pantothenate from (R)-pantoate and beta-alanine: step 1/1. Catalyzes the condensation of pantoate with beta-alanine in an ATP-dependent reaction via a pantoyl-adenylate intermediate. The polypeptide is Pantothenate synthetase (Nitratidesulfovibrio vulgaris (strain DSM 19637 / Miyazaki F) (Desulfovibrio vulgaris)).